Consider the following 509-residue polypeptide: Bifunctional purine biosynthesis protein PurH (509 aa).

Residues Met-1–Val-144 enclose the MGS-like domain.

Belongs to the PurH family.

The enzyme catalyses (6R)-10-formyltetrahydrofolate + 5-amino-1-(5-phospho-beta-D-ribosyl)imidazole-4-carboxamide = 5-formamido-1-(5-phospho-D-ribosyl)imidazole-4-carboxamide + (6S)-5,6,7,8-tetrahydrofolate. The catalysed reaction is IMP + H2O = 5-formamido-1-(5-phospho-D-ribosyl)imidazole-4-carboxamide. It participates in purine metabolism; IMP biosynthesis via de novo pathway; 5-formamido-1-(5-phospho-D-ribosyl)imidazole-4-carboxamide from 5-amino-1-(5-phospho-D-ribosyl)imidazole-4-carboxamide (10-formyl THF route): step 1/1. It functions in the pathway purine metabolism; IMP biosynthesis via de novo pathway; IMP from 5-formamido-1-(5-phospho-D-ribosyl)imidazole-4-carboxamide: step 1/1. This Listeria welshimeri serovar 6b (strain ATCC 35897 / DSM 20650 / CCUG 15529 / CIP 8149 / NCTC 11857 / SLCC 5334 / V8) protein is Bifunctional purine biosynthesis protein PurH.